A 275-amino-acid chain; its full sequence is NH(3)-dependent NAD(+) synthetase (275 aa).

46–53 (GISGGQDS) lines the ATP pocket. Aspartate 52 is a binding site for Mg(2+). A deamido-NAD(+)-binding site is contributed by arginine 140. ATP is bound at residue threonine 160. Position 165 (glutamate 165) interacts with Mg(2+). Deamido-NAD(+)-binding residues include lysine 173 and aspartate 180. ATP-binding residues include lysine 189 and threonine 211. 260 to 261 (HK) contributes to the deamido-NAD(+) binding site.

The protein belongs to the NAD synthetase family. As to quaternary structure, homodimer.

It catalyses the reaction deamido-NAD(+) + NH4(+) + ATP = AMP + diphosphate + NAD(+) + H(+). The protein operates within cofactor biosynthesis; NAD(+) biosynthesis; NAD(+) from deamido-NAD(+) (ammonia route): step 1/1. In terms of biological role, catalyzes the ATP-dependent amidation of deamido-NAD to form NAD. Uses ammonia as a nitrogen source. The sequence is that of NH(3)-dependent NAD(+) synthetase from Salmonella enteritidis PT4 (strain P125109).